A 448-amino-acid chain; its full sequence is Phosphoglucosamine mutase (448 aa).

Residue serine 100 is the Phosphoserine intermediate of the active site. Mg(2+) contacts are provided by serine 100, aspartate 240, aspartate 242, and aspartate 244. Residue serine 100 is modified to Phosphoserine.

This sequence belongs to the phosphohexose mutase family. Mg(2+) is required as a cofactor. In terms of processing, activated by phosphorylation.

It carries out the reaction alpha-D-glucosamine 1-phosphate = D-glucosamine 6-phosphate. Catalyzes the conversion of glucosamine-6-phosphate to glucosamine-1-phosphate. The chain is Phosphoglucosamine mutase from Clostridioides difficile (strain 630) (Peptoclostridium difficile).